A 101-amino-acid chain; its full sequence is NAD(P)H-quinone oxidoreductase subunit 4L, chloroplastic (101 aa).

The next 3 membrane-spanning stretches (helical) occupy residues 2 to 22, 32 to 52, and 61 to 81; these read ILEHVLVLSAYLFFIGLYGLI, MCLELILNAVNMNFVTFSDFF, and IFCIFVIAIAAAEAAIGLAIV.

This sequence belongs to the complex I subunit 4L family. NDH is composed of at least 16 different subunits, 5 of which are encoded in the nucleus.

It is found in the plastid. It localises to the chloroplast thylakoid membrane. It carries out the reaction a plastoquinone + NADH + (n+1) H(+)(in) = a plastoquinol + NAD(+) + n H(+)(out). It catalyses the reaction a plastoquinone + NADPH + (n+1) H(+)(in) = a plastoquinol + NADP(+) + n H(+)(out). Functionally, NDH shuttles electrons from NAD(P)H:plastoquinone, via FMN and iron-sulfur (Fe-S) centers, to quinones in the photosynthetic chain and possibly in a chloroplast respiratory chain. The immediate electron acceptor for the enzyme in this species is believed to be plastoquinone. Couples the redox reaction to proton translocation, and thus conserves the redox energy in a proton gradient. The chain is NAD(P)H-quinone oxidoreductase subunit 4L, chloroplastic from Aethionema cordifolium (Lebanon stonecress).